The following is a 149-amino-acid chain: Calmodulin-2 (149 aa).

Residue Ala-2 is modified to N-acetylalanine. EF-hand domains are found at residues 8–43 (EQIA…LGQN), 44–79 (PTEG…KMKD), 81–116 (DSEE…PGEK), and 117–149 (LTDE…MTSK). Residues Asp-21, Asp-23, Asn-25, Asn-27, Glu-32, Asp-57, Asp-59, Asn-61, Thr-63, Glu-68, Asp-94, Asp-96, Asn-98, and Glu-105 each contribute to the Ca(2+) site. Lys-116 bears the N6,N6,N6-trimethyllysine mark. Residues Asp-130, Asp-132, Asp-134, Gln-136, and Glu-141 each coordinate Ca(2+).

Belongs to the calmodulin family.

Functionally, calmodulin mediates the control of a large number of enzymes, ion channels and other proteins by Ca(2+). Among the enzymes to be stimulated by the calmodulin-Ca(2+) complex are a number of protein kinases and phosphatases. The sequence is that of Calmodulin-2 (CAM2) from Branchiostoma floridae (Florida lancelet).